Consider the following 42-residue polypeptide: Photosystem I reaction center subunit IX (42 aa).

Residues 7–27 (YLSIAPVLATLWFGFLVGSLI) traverse the membrane as a helical segment.

Belongs to the PsaJ family.

The protein localises to the plastid membrane. Functionally, may help in the organization of the PsaE and PsaF subunits. The polypeptide is Photosystem I reaction center subunit IX (Aneura mirabilis (Parasitic liverwort)).